The sequence spans 306 residues: 2-phospho-L-lactate transferase (306 aa).

The 7,8-didemethyl-8-hydroxy-5-deazariboflavin site is built by Asp-54 and Arg-93.

This sequence belongs to the CofD family. Homodimer. It depends on Mg(2+) as a cofactor.

The enzyme catalyses (2S)-lactyl-2-diphospho-5'-guanosine + 7,8-didemethyl-8-hydroxy-5-deazariboflavin = oxidized coenzyme F420-0 + GMP + H(+). It participates in cofactor biosynthesis; coenzyme F420 biosynthesis. Catalyzes the transfer of the 2-phospholactate moiety from (2S)-lactyl-2-diphospho-5'-guanosine to 7,8-didemethyl-8-hydroxy-5-deazariboflavin (FO) with the formation of oxidized coenzyme F420-0 and GMP. In Methanothermobacter thermautotrophicus (strain ATCC 29096 / DSM 1053 / JCM 10044 / NBRC 100330 / Delta H) (Methanobacterium thermoautotrophicum), this protein is 2-phospho-L-lactate transferase.